The sequence spans 483 residues: Glycogen synthase kinase-3 alpha (483 aa).

Over residues 1-15 the composition is skewed to gly residues; it reads MSGGGPSGGGPGGSG. A disordered region spans residues 1-96; the sequence is MSGGGPSGGG…PPPGVKLGRD (96 aa). Ser-2 bears the N-acetylserine mark. Position 2 is a phosphoserine (Ser-2). Ser-21 is modified (phosphoserine; by PKB/AKT1). A compositionally biased stretch (gly residues) spans 25–82; the sequence is PGGGGGGGGGGPGGSASGPGGTGGGKASVGAMGGGVGASSSGGGPGGSGGGGSGGPGA. Phosphoserine occurs at positions 72, 77, and 97. A Protein kinase domain is found at 119 to 403; the sequence is YTDIKVIGNG…PLEACAHSFF (285 aa). ATP contacts are provided by residues 125 to 133 and Lys-148; that span reads IGNGSFGVV. The active-site Proton acceptor is Asp-244. A Phosphotyrosine modification is found at Tyr-279. The segment at 449 to 483 is disordered; sequence AGTTTLTPSSQALTETPTSSDWQSTDATPTLTNSS.

It belongs to the protein kinase superfamily. CMGC Ser/Thr protein kinase family. GSK-3 subfamily. As to quaternary structure, monomer. Interacts with ARRB2. Interacts with AXIN1 and CTNNB1/beta-catenin. Interacts with CTNND2. Interacts with LMBR1L. Interacts with DDX3X. Interacts with TNFRSF10B. Interacts with RICTOR; the interaction results in phosphorylation of RICTOR at 'Thr-1695' by GSK3A which facilitates FBXW7-mediated ubiquitination and subsequent degradation of RICTOR. (Microbial infection) Interacts with M.tuberculosis PtpA. In terms of processing, phosphorylated by AKT1 at Ser-21: upon insulin-mediated signaling, the activated PKB/AKT1 protein kinase phosphorylates and deactivates GSK3A, resulting in the dephosphorylation and activation of GYS1. Activated by phosphorylation at Tyr-279. Post-translationally, (Microbial infection) Dephosphorylated at Tyr-279 by M.tuberculosis PtpA, which leads to prevention of apoptosis during early stages of microbial infection.

The catalysed reaction is L-seryl-[tau protein] + ATP = O-phospho-L-seryl-[tau protein] + ADP + H(+). The enzyme catalyses L-threonyl-[tau protein] + ATP = O-phospho-L-threonyl-[tau protein] + ADP + H(+). It catalyses the reaction L-seryl-[protein] + ATP = O-phospho-L-seryl-[protein] + ADP + H(+). It carries out the reaction L-threonyl-[protein] + ATP = O-phospho-L-threonyl-[protein] + ADP + H(+). Activated by phosphorylation at Tyr-279. In response to insulin, inhibited by phosphorylation at Ser-21 by PKB/AKT1; phosphorylation at this site causes a conformational change, preventing access of substrates to the active site. Inhibited by lithium. Functionally, constitutively active protein kinase that acts as a negative regulator in the hormonal control of glucose homeostasis, Wnt signaling and regulation of transcription factors and microtubules, by phosphorylating and inactivating glycogen synthase (GYS1 or GYS2), CTNNB1/beta-catenin, APC and AXIN1. Requires primed phosphorylation of the majority of its substrates. Contributes to insulin regulation of glycogen synthesis by phosphorylating and inhibiting GYS1 activity and hence glycogen synthesis. Regulates glycogen metabolism in liver, but not in muscle. May also mediate the development of insulin resistance by regulating activation of transcription factors. In Wnt signaling, regulates the level and transcriptional activity of nuclear CTNNB1/beta-catenin. Facilitates amyloid precursor protein (APP) processing and the generation of APP-derived amyloid plaques found in Alzheimer disease. May be involved in the regulation of replication in pancreatic beta-cells. Is necessary for the establishment of neuronal polarity and axon outgrowth. Through phosphorylation of the anti-apoptotic protein MCL1, may control cell apoptosis in response to growth factors deprivation. Acts as a regulator of autophagy by mediating phosphorylation of KAT5/TIP60 under starvation conditions which activates KAT5/TIP60 acetyltransferase activity and promotes acetylation of key autophagy regulators, such as ULK1 and RUBCNL/Pacer. Negatively regulates extrinsic apoptotic signaling pathway via death domain receptors. Promotes the formation of an anti-apoptotic complex, made of DDX3X, BRIC2 and GSK3B, at death receptors, including TNFRSF10B. The anti-apoptotic function is most effective with weak apoptotic signals and can be overcome by stronger stimulation. Phosphorylates mTORC2 complex component RICTOR at 'Thr-1695' which facilitates FBXW7-mediated ubiquitination and subsequent degradation of RICTOR. The sequence is that of Glycogen synthase kinase-3 alpha (GSK3A) from Homo sapiens (Human).